Reading from the N-terminus, the 283-residue chain is Pyridoxal kinase PdxY (283 aa).

Serine 8 is a binding site for substrate. Aspartate 110 and glutamate 147 together coordinate ATP. Aspartate 219 lines the substrate pocket.

The protein belongs to the pyridoxine kinase family. PdxY subfamily. Homodimer. Requires Mg(2+) as cofactor.

It carries out the reaction pyridoxal + ATP = pyridoxal 5'-phosphate + ADP + H(+). It functions in the pathway cofactor metabolism; pyridoxal 5'-phosphate salvage; pyridoxal 5'-phosphate from pyridoxal: step 1/1. Functionally, pyridoxal kinase involved in the salvage pathway of pyridoxal 5'-phosphate (PLP). Catalyzes the phosphorylation of pyridoxal to PLP. In Corynebacterium diphtheriae (strain ATCC 700971 / NCTC 13129 / Biotype gravis), this protein is Pyridoxal kinase PdxY.